The chain runs to 458 residues: Argininosuccinate lyase (458 aa).

It belongs to the lyase 1 family. Argininosuccinate lyase subfamily.

It localises to the cytoplasm. It carries out the reaction 2-(N(omega)-L-arginino)succinate = fumarate + L-arginine. The protein operates within amino-acid biosynthesis; L-arginine biosynthesis; L-arginine from L-ornithine and carbamoyl phosphate: step 3/3. This Neisseria meningitidis serogroup C (strain 053442) protein is Argininosuccinate lyase.